The primary structure comprises 1406 residues: Enhancer of mRNA-decapping protein 4 (1406 aa).

Position 2 is an N-acetylalanine (alanine 2). 2 positions are modified to phosphoserine: serine 3 and serine 6. Lysine 125 bears the N6-acetyllysine mark. WD repeat units follow at residues 174 to 214, 230 to 277, 295 to 334, and 342 to 393; these read GFTG…GKIQ, NHFR…SSHN, GHSTCLSEGALSPDGTVLATASHDGFVKFWQIYIEGQDEP, and PHDG…CLQT. Phosphoserine is present on residues serine 560, serine 565, serine 583, and serine 585. 2 disordered regions span residues 604-631 and 667-686; these read SLQQISASPSSSSSSSSSSSSSSSSSSS and SLTLNSSSSSLQASPRSLLP. Positions 609-631 are enriched in low complexity; the sequence is SASPSSSSSSSSSSSSSSSSSSS. 4 positions are modified to phosphoserine: serine 680, serine 712, serine 727, and serine 729. A disordered region spans residues 719–744; the sequence is EPLGLPQASPSRTRSPDVISSASTAL. The segment covering 726–744 has biased composition (polar residues); it reads ASPSRTRSPDVISSASTAL. Threonine 731 is subject to Phosphothreonine. 2 positions are modified to phosphoserine: serine 733 and serine 745. Disordered stretches follow at residues 782 to 855 and 873 to 951; these read HLLS…NGLQ and QRDS…VAEP. Composition is skewed to polar residues over residues 823–832 and 841–852; these read EVATPDSQVW and ETCSTLTESPRN. Threonine 826 is modified (phosphothreonine). 2 positions are modified to phosphoserine: serine 849 and serine 876. Phosphothreonine is present on threonine 879. Phosphoserine occurs at positions 880, 884, 892, 895, and 897. Residue threonine 906 is modified to Phosphothreonine. Residues 971-1030 are a coiled coil; the sequence is HNQEELLQRLCAQLEGLQSTVTDHVERALETRHEQEQRRLERALAEGQQRGGQLQEQLTQ. Position 1385 is a phosphoserine (serine 1385).

This sequence belongs to the WD repeat EDC4 family. As to quaternary structure, part of a decapping complex consisting of DCP1A, DCP2, EDC3, EDC4 and probably DDX6. Part of a complex consisting of DCP1A, EDC3, EDC4 and DDX6. Part of a complex consisting of DCP1B, EDC3, EDC4 and DDX6. Interacts with DCP2. Interacts with RC3H1. Interacts with NBDY. Interacts with Tex19.1 and, probably, Tex19.2. Interacts with LSM14A. Interacts with DDX6.

The protein localises to the cytoplasm. It localises to the P-body. Its subcellular location is the nucleus. Functionally, in the process of mRNA degradation, seems to play a role in mRNA decapping. Component of a complex containing DCP2 and DCP1A which functions in decapping of ARE-containing mRNAs. Promotes complex formation between DCP1A and DCP2. Enhances the catalytic activity of DCP2 (in vitro). The protein is Enhancer of mRNA-decapping protein 4 of Mus musculus (Mouse).